The primary structure comprises 657 residues: Protein FAM200B (657 aa).

It belongs to the FAM200 family.

This Homo sapiens (Human) protein is Protein FAM200B.